We begin with the raw amino-acid sequence, 468 residues long: Trehalose-binding lipoprotein LpqY (468 aa).

Positions 1–25 are cleaved as a signal peptide; the sequence is MVMSRGRIPRLGAAVLVALTTAAAA. The N-palmitoyl cysteine moiety is linked to residue C26. C26 carries S-diacylglycerol cysteine lipidation. A disulfide bridge connects residues C54 and C372. Alpha,alpha-trehalose-binding residues include D97, N151, W276, F278, G351, and R421.

It belongs to the bacterial solute-binding protein 1 family. In terms of assembly, monomer. The complex is composed of two ATP-binding proteins (SugC), two transmembrane proteins (SugA and SugB) and a solute-binding protein (LpqY).

The protein localises to the cell inner membrane. Functionally, part of the ABC transporter complex LpqY-SugA-SugB-SugC, which is highly specific for uptake of trehalose. Involved in the recycling of extracellular trehalose released from trehalose-containing molecules synthesized by M.tuberculosis. Trehalose uptake is essential for virulence. In Mycobacterium tuberculosis (strain CDC 1551 / Oshkosh), this protein is Trehalose-binding lipoprotein LpqY (lpqY).